The following is a 127-amino-acid chain: Glycine cleavage system H protein (127 aa).

The Lipoyl-binding domain maps to glutamate 22–lysine 104. An N6-lipoyllysine modification is found at lysine 63.

This sequence belongs to the GcvH family. The glycine cleavage system is composed of four proteins: P, T, L and H. (R)-lipoate serves as cofactor.

In terms of biological role, the glycine cleavage system catalyzes the degradation of glycine. The H protein shuttles the methylamine group of glycine from the P protein to the T protein. This Nitratidesulfovibrio vulgaris (strain DSM 19637 / Miyazaki F) (Desulfovibrio vulgaris) protein is Glycine cleavage system H protein.